Reading from the N-terminus, the 338-residue chain is Ketol-acid reductoisomerase (NADP(+)) (338 aa).

The KARI N-terminal Rossmann domain occupies 1 to 181 (MQVYYDKDCD…GGGRSGIIET (181 aa)). Residues 24–27 (YGSQ), Arg-47, Ser-50, Ser-52, and 82–85 (DEFQ) each bind NADP(+). Residue His-107 is part of the active site. NADP(+) is bound at residue Gly-133. The KARI C-terminal knotted domain occupies 182 to 327 (TFKDETETDL…GKLRAMMPWI (146 aa)). The Mg(2+) site is built by Asp-190, Glu-194, Glu-226, and Glu-230. A substrate-binding site is contributed by Ser-251.

Belongs to the ketol-acid reductoisomerase family. It depends on Mg(2+) as a cofactor.

It carries out the reaction (2R)-2,3-dihydroxy-3-methylbutanoate + NADP(+) = (2S)-2-acetolactate + NADPH + H(+). The enzyme catalyses (2R,3R)-2,3-dihydroxy-3-methylpentanoate + NADP(+) = (S)-2-ethyl-2-hydroxy-3-oxobutanoate + NADPH + H(+). Its pathway is amino-acid biosynthesis; L-isoleucine biosynthesis; L-isoleucine from 2-oxobutanoate: step 2/4. It functions in the pathway amino-acid biosynthesis; L-valine biosynthesis; L-valine from pyruvate: step 2/4. Involved in the biosynthesis of branched-chain amino acids (BCAA). Catalyzes an alkyl-migration followed by a ketol-acid reduction of (S)-2-acetolactate (S2AL) to yield (R)-2,3-dihydroxy-isovalerate. In the isomerase reaction, S2AL is rearranged via a Mg-dependent methyl migration to produce 3-hydroxy-3-methyl-2-ketobutyrate (HMKB). In the reductase reaction, this 2-ketoacid undergoes a metal-dependent reduction by NADPH to yield (R)-2,3-dihydroxy-isovalerate. This is Ketol-acid reductoisomerase (NADP(+)) from Saccharophagus degradans (strain 2-40 / ATCC 43961 / DSM 17024).